Here is a 468-residue protein sequence, read N- to C-terminus: MTKTLPKDFIFGGATAAYQAEGATHTDGKGPVAWDKYLEDNYWYTAEPASDFYNRYPVDLKLAEEYGVNGIRISIAWSRIFPTGYGQVNAKGVEFYHNLFAECHKRHVEPFVTLHHFDTPEALHSNGDFLNRENIEHFVDYAAFCFEEFPEVNYWTTFNEIGPIGDGQYLVGKFPPGIQYDLAKVFQSHHNMMVSHACAVKLYKEKGYKGEIGVVHALPTKYPLDPENPADVRAAELEDIIHNKFILDATYLGRYSAETMEGVNHILSVNGGSLDLREEDFTALEAAKDLNDFLGINYYMSDWMEAFDGETEIIHNGKGEKGSSKYQIKGIGRRVAPDYVSRTDWDWIIYPQGLYDQIMRVKKDYPNYKKIYITENGLGYKDEFVDNTVYDDGRIDYVKQHLEILSDAIADGANVKGYFIWSLMDVFSWSNGYEKRYGLFYVDFETQERYPKKSAHWYKKVAETQIID.

D-galactose 6-phosphate is bound by residues Gln-19, His-116, Asn-159, Glu-160, and Asn-297. The active-site Proton donor is the Glu-160. Glu-375 serves as the catalytic Nucleophile. D-galactose 6-phosphate-binding residues include Ser-428, Trp-429, Lys-435, and Tyr-437.

Belongs to the glycosyl hydrolase 1 family.

The catalysed reaction is a 6-phospho-beta-D-galactoside + H2O = D-galactose 6-phosphate + an alcohol. The protein operates within carbohydrate metabolism; lactose degradation; D-galactose 6-phosphate and beta-D-glucose from lactose 6-phosphate: step 1/1. In Streptococcus pneumoniae (strain JJA), this protein is 6-phospho-beta-galactosidase.